A 1158-amino-acid polypeptide reads, in one-letter code: ATP-dependent helicase/deoxyribonuclease subunit B (1158 aa).

The UvrD-like helicase ATP-binding domain occupies 1 to 275 (MTLHAYLGRA…QYFNQLYRFN (275 aa)). ATP is bound at residue 8–15 (GRAGTGKS). A UvrD-like helicase C-terminal domain is found at 269–583 (NQLYRFNNQD…SIGTMDLAKV (315 aa)). Residues Cys784, Cys1112, Cys1115, and Cys1121 each contribute to the [4Fe-4S] cluster site.

The protein belongs to the helicase family. AddB/RexB type 1 subfamily. As to quaternary structure, heterodimer of AddA and AddB. Requires Mg(2+) as cofactor. The cofactor is [4Fe-4S] cluster.

Its function is as follows. The heterodimer acts as both an ATP-dependent DNA helicase and an ATP-dependent, dual-direction single-stranded exonuclease. Recognizes the chi site generating a DNA molecule suitable for the initiation of homologous recombination. The AddB subunit has 5' -&gt; 3' nuclease activity but not helicase activity. The sequence is that of ATP-dependent helicase/deoxyribonuclease subunit B from Staphylococcus aureus (strain MRSA252).